Here is an 830-residue protein sequence, read N- to C-terminus: AdoMet-dependent rRNA methyltransferase SPB1 (830 aa).

S-adenosyl-L-methionine-binding residues include glycine 58, tryptophan 60, aspartate 78, aspartate 94, and aspartate 119. The active-site Proton acceptor is lysine 159. Residues 345 to 388 (LTEEEQIEKELQEMQQKQNLKKKREKRKQNEIKQKEITRMQMQM) adopt a coiled-coil conformation. 2 disordered regions span residues 485-529 (AKEA…SDSD) and 565-642 (EADL…AREV). 3 stretches are compositionally biased toward acidic residues: residues 516–529 (VDDD…SDSD), 591–610 (VSEE…DSDF), and 618–630 (DESD…EDEA). Positions 631–642 (ERSQKEKHAREV) are enriched in basic and acidic residues.

Belongs to the class I-like SAM-binding methyltransferase superfamily. RNA methyltransferase RlmE family. SPB1 subfamily. As to quaternary structure, component of the nucleolar and nucleoplasmic pre-60S ribosomal particle.

It is found in the nucleus. Its subcellular location is the nucleolus. The catalysed reaction is a ribonucleotide in rRNA + S-adenosyl-L-methionine = a 2'-O-methylribonucleotide in rRNA + S-adenosyl-L-homocysteine + H(+). Required for proper assembly of pre-ribosomal particles during the biogenesis of the 60S ribosomal subunit. The protein is AdoMet-dependent rRNA methyltransferase SPB1 of Eremothecium gossypii (strain ATCC 10895 / CBS 109.51 / FGSC 9923 / NRRL Y-1056) (Yeast).